A 157-amino-acid polypeptide reads, in one-letter code: SsrA-binding protein (157 aa).

Positions 134-157 (HDKRESEKKRDWGREKGRLLRARG) are disordered. Over residues 135–151 (DKRESEKKRDWGREKGR) the composition is skewed to basic and acidic residues.

The protein belongs to the SmpB family.

It localises to the cytoplasm. In terms of biological role, required for rescue of stalled ribosomes mediated by trans-translation. Binds to transfer-messenger RNA (tmRNA), required for stable association of tmRNA with ribosomes. tmRNA and SmpB together mimic tRNA shape, replacing the anticodon stem-loop with SmpB. tmRNA is encoded by the ssrA gene; the 2 termini fold to resemble tRNA(Ala) and it encodes a 'tag peptide', a short internal open reading frame. During trans-translation Ala-aminoacylated tmRNA acts like a tRNA, entering the A-site of stalled ribosomes, displacing the stalled mRNA. The ribosome then switches to translate the ORF on the tmRNA; the nascent peptide is terminated with the 'tag peptide' encoded by the tmRNA and targeted for degradation. The ribosome is freed to recommence translation, which seems to be the essential function of trans-translation. This is SsrA-binding protein from Nitrobacter hamburgensis (strain DSM 10229 / NCIMB 13809 / X14).